The following is a 228-amino-acid chain: Auxin-responsive protein IAA16 (228 aa).

An EAR-like (transcriptional repression) motif is present at residues 19 to 23; the sequence is LSLAL. A compositionally biased stretch (polar residues) spans 28–39; that stretch reads SSSGLQGNTSTA. Disordered regions lie at residues 28–57 and 70–90; these read SSSG…PAAP and NLAS…AAAA. Residues 97 to 214 enclose the PB1 domain; it reads ARFVKVNMDG…RVLRSSDLNA (118 aa).

It belongs to the Aux/IAA family. In terms of assembly, homodimers and heterodimers. In terms of tissue distribution, expressed in roots, flowers and seedlings.

It is found in the nucleus. Functionally, aux/IAA proteins are short-lived transcriptional factors that function as repressors of early auxin response genes at low auxin concentrations. The polypeptide is Auxin-responsive protein IAA16 (IAA16) (Oryza sativa subsp. japonica (Rice)).